The primary structure comprises 143 residues: Transthyretin-like protein 33 (143 aa).

The first 20 residues, 1 to 20, serve as a signal peptide directing secretion; the sequence is MSRLACISSLFILCAIGSEA.

The protein belongs to the nematode transthyretin-like family. Expressed in head cells next to and anterior of the first pharyngeal bulb, the pharynx, and the hypodermis.

It localises to the secreted. Its function is as follows. Protects dopaminergic neurons from degeneration caused by oxidative stress. The sequence is that of Transthyretin-like protein 33 from Caenorhabditis elegans.